Reading from the N-terminus, the 173-residue chain is MTTIVCVRKDGKVAIGGDGQATLGNCVEKGTVRKVRRLYKDKVVTGFAGSTADAFILRDLFEKKLELHQGHLVKSAVELAKEWRTERSLRKLEAMMIVANESEFLLVSGSGDVIEPEFDVLAIGSGGNYAKAAALALLRTENNLSAKEIVAEALKIAGDIDIYSNHNHVIEEV.

The active site involves threonine 2. Glycine 158, aspartate 161, and serine 164 together coordinate Na(+).

It belongs to the peptidase T1B family. HslV subfamily. A double ring-shaped homohexamer of HslV is capped on each side by a ring-shaped HslU homohexamer. The assembly of the HslU/HslV complex is dependent on binding of ATP.

It localises to the cytoplasm. The enzyme catalyses ATP-dependent cleavage of peptide bonds with broad specificity.. Its activity is regulated as follows. Allosterically activated by HslU binding. In terms of biological role, protease subunit of a proteasome-like degradation complex believed to be a general protein degrading machinery. This Glaesserella parasuis serovar 5 (strain SH0165) (Haemophilus parasuis) protein is ATP-dependent protease subunit HslV.